The sequence spans 83 residues: Large ribosomal subunit protein bL27 (83 aa).

The segment at 1–20 is disordered; that stretch reads MAHKKGASSSRNGRDSNPQY. Residues 7 to 19 are compositionally biased toward polar residues; that stretch reads ASSSRNGRDSNPQ.

The protein belongs to the bacterial ribosomal protein bL27 family.

This chain is Large ribosomal subunit protein bL27, found in Bifidobacterium animalis subsp. lactis (strain AD011).